The primary structure comprises 1050 residues: MDTSHEIHDKIPDTLREQQQHLRQKESEGCITTLKDLNVPETKKLSSVLHGRKASTYLRIFRDDECLADNNNGVDSNNGGSVTCADKITRSEATPKSVPEGLQVSEKKNNPDTLSSSLSSFILSNHEEPAIKPNKHVAHRNNITETGQGSGEDIAKQQSHQPQVLHHQTSLKPIQNVDEGCISPKSTYQESLHGISEDLTLKPVSSATYYPHKSKADSGYEEKDKMENDIDTIQPATINCASGIATLPSSYNRHTFKVKTYSTLSQSLRQENVNNRSNEKKPQQFVPHSESIKEKPNTFEQDKEGEQADEEEDEGDNEHREYPLAVELKPFTNRVGGHTAIFRFSKRAVCKALVNRENRWYENIELCHKELLQFMPRYIGVLNVRQHFQSKDDFLSDLDQENNGKNDTSNENKDIEVNHNNNDDIALNTEPTGTPLTHIHSFPLEHSSRQVLEKEHPEIESVHPHVKRSLSSSNQPSLLPEVVLNDNRHIIPESLWYKYSDSPNSAPNDSYFSSSSSHNSCSFGERGNTNKLKRRDSGSTMINTELKNLVIREVFAPKCFRRKRNSNTTTMGNHNARLGSSPSFLTQKSRASSHDASNTSMKTLGDSSSQASLQMDDSKVNPNLQDPFLKKSLHEKISNALDGSHSVMDLKQFHKNEQIKHKNSFCNSLSPILTATNSRDDGEFATSPNYISNAQDGVFDMDEDTGNETINMDNHGCHLDSGKNMIIKSLAYNVSNDYSHHDIESITFEETSHTIVSKFILLEDLTRNMNKPCALDLKMGTRQYGVDAKRAKQLSQRAKCLKTTSRRLGVRICGLKVWNKDYYITRDKYFGRRVKVGWQFARVLARFLYDGKTIESLIRQIPRLIKQLDTLYSEIFNLKGYRLYGASLLLMYDGDANKSNSKRKKAANVKVNLIDFARCVTKEDAMECMDKFRIPPKSPNIEDKGFLRGVKSLRFYLLLIWNYLTSDMPLIFDEVEMNDMISEEADSNSFTSATGSKINFNSKWDWLDEFDKEDEEMYNDPNSKLRQKWRKYELIFDAEPRYNDDAQVSD.

Disordered stretches follow at residues lysine 87–serine 117, proline 129–valine 177, arginine 269–histidine 319, and serine 396–aspartate 423. Position 150 is a phosphoserine (serine 150). Positions lysine 156–proline 173 are enriched in polar residues. Basic and acidic residues predominate over residues glutamate 290–glutamate 306. Over residues glutamine 307–aspartate 316 the composition is skewed to acidic residues. Position 396 is a phosphoserine (serine 396). Positions asparagine 402–valine 417 are enriched in basic and acidic residues. Residue serine 469 is modified to Phosphoserine. A compositionally biased stretch (low complexity) spans asparagine 508–serine 522. Disordered stretches follow at residues asparagine 508–serine 539 and arginine 562–glutamine 625. Serine 537, serine 539, serine 566, serine 583, serine 589, serine 646, serine 664, and serine 670 each carry phosphoserine. The segment covering serine 566–leucine 624 has biased composition (polar residues). Proline 772–glycine 780 provides a ligand contact to substrate.

Belongs to the inositol phosphokinase (IPK) family.

The protein localises to the cytoplasm. It catalyses the reaction 1D-myo-inositol hexakisphosphate + ATP = 5-diphospho-1D-myo-inositol 1,2,3,4,6-pentakisphosphate + ADP. It carries out the reaction 1-diphospho-1D-myo-inositol 2,3,4,5,6-pentakisphosphate + ATP + H(+) = 1,5-bis(diphospho)-1D-myo-inositol 2,3,4,6-tetrakisphosphate + ADP. Its function is as follows. Converts inositol hexakisphosphate (InsP6) to diphosphoinositol pentakisphosphate (InsP7/PP-InsP5). Involved in phosphate regulation and polyphosphate accumulation. Required for resistance to salt stress, cell wall integrity, vacuole morphogenesis, and telomere maintenance. This Saccharomyces cerevisiae (strain ATCC 204508 / S288c) (Baker's yeast) protein is Inositol hexakisphosphate kinase 1 (KCS1).